A 278-amino-acid chain; its full sequence is tRNA pseudouridine synthase A (278 aa).

D52 serves as the catalytic Nucleophile. Y111 serves as a coordination point for substrate. Over residues 253–264 (AKAGPLEAAPLG) the composition is skewed to low complexity. Residues 253–278 (AKAGPLEAAPLGEAPLKEATLKEDWR) form a disordered region. Residues 267–278 (PLKEATLKEDWR) show a composition bias toward basic and acidic residues.

Belongs to the tRNA pseudouridine synthase TruA family. In terms of assembly, homodimer.

It catalyses the reaction uridine(38/39/40) in tRNA = pseudouridine(38/39/40) in tRNA. Functionally, formation of pseudouridine at positions 38, 39 and 40 in the anticodon stem and loop of transfer RNAs. This chain is tRNA pseudouridine synthase A, found in Rhodospirillum rubrum (strain ATCC 11170 / ATH 1.1.1 / DSM 467 / LMG 4362 / NCIMB 8255 / S1).